The following is a 229-amino-acid chain: Large ribosomal subunit protein uL1 (229 aa).

It belongs to the universal ribosomal protein uL1 family. In terms of assembly, part of the 50S ribosomal subunit.

Its function is as follows. Binds directly to 23S rRNA. The L1 stalk is quite mobile in the ribosome, and is involved in E site tRNA release. In terms of biological role, protein L1 is also a translational repressor protein, it controls the translation of the L11 operon by binding to its mRNA. This chain is Large ribosomal subunit protein uL1, found in Streptococcus pneumoniae (strain ATCC 700669 / Spain 23F-1).